The primary structure comprises 998 residues: tRNA (34-2'-O)-methyltransferase regulator WDR6 (998 aa).

WD repeat units follow at residues 148–185 (LYYTKLHGSSFNKLAIISGNAFGELLVWQTQFPTESDP), 200–239 (AHNGVIHSIEFDLQSQLLVTTSDDRSVKFWNIQKSGDWTT), 250–291 (GHSS…ILKR), 294–333 (QFGAPIWRLGFSQDAEILYSTSSTGNLVGQNLKEVLNRPK), 476–515 (NNREPWITAALLISEQYLLLGNREGHVMLYCRSSASDDFQ), 527–566 (MGSNFFKLLSLNADNAHVMSGGHEAFLKYLSVRFSDSTLR), 567–608 (VSQR…LLQL), 664–704 (RNCN…LSQR), 779–821 (ARLM…QLDL), 826–865 (DIQRCPLGIQWIASKGMLLVSTTNGEVYGFDRTLETTYFQ), and 868–911 (LHVT…VEQK).

This sequence belongs to the WD repeat WDR6 family. In terms of assembly, interacts with Trm7-34.

The protein localises to the cytoplasm. In terms of biological role, together with methyltransferase Trm7-34, methylates the 2'-O-ribose of nucleotides at position 34 of the anticodon loop of substrate tRNAs. This chain is tRNA (34-2'-O)-methyltransferase regulator WDR6, found in Drosophila melanogaster (Fruit fly).